Here is a 261-residue protein sequence, read N- to C-terminus: Potassium/proton antiporter CemA (261 aa).

A run of 3 helical transmembrane segments spans residues 138–158 (IISHLLTNLIGFAFISAYLIL), 184–204 (FLILLATDLCIGFHSPHGWEL), and 221–241 (IISGLVSTFPVILDTILKYWI).

The protein belongs to the CemA family.

It is found in the plastid. The protein localises to the chloroplast inner membrane. The catalysed reaction is K(+)(in) + H(+)(out) = K(+)(out) + H(+)(in). In terms of biological role, contributes to K(+)/H(+) antiport activity by supporting proton efflux to control proton extrusion and homeostasis in chloroplasts in a light-dependent manner to modulate photosynthesis. Prevents excessive induction of non-photochemical quenching (NPQ) under continuous-light conditions. Indirectly promotes efficient inorganic carbon uptake into chloroplasts. The protein is Potassium/proton antiporter CemA of Pinus koraiensis (Korean pine).